We begin with the raw amino-acid sequence, 325 residues long: Chain length determinant protein (325 aa).

Topologically, residues 1–31 (MRVENNNVSGQNHDPEQIDLIDLLVQLWRGK) are cytoplasmic. The helical transmembrane segment at 32-52 (MTIIISVIVAIALAIGYLAVA) threads the bilayer. Residues 53–294 (KEKWTSTAII…LPIRRDSPKK (242 aa)) lie on the Periplasmic side of the membrane. The helical transmembrane segment at 295 to 315 (AITLILAVLLGGMVGAGIVLG) threads the bilayer. The Cytoplasmic portion of the chain corresponds to 316-325 (RNALRNYNAK).

Belongs to the WzzB/Cld/Rol family.

Its subcellular location is the cell inner membrane. The protein operates within bacterial outer membrane biogenesis; lipopolysaccharide biosynthesis. In terms of biological role, confers a modal distribution of chain length on the O-antigen component of lipopolysaccharide (LPS). Gives rise to a reduced number of short chain molecules and increases in numbers of longer molecules. This Shigella flexneri protein is Chain length determinant protein (wzzB).